The chain runs to 498 residues: Calcium uptake protein, mitochondrial (498 aa).

A mitochondrion-targeting transit peptide spans 1–29 (MPALSHYRSVSSLPSVDRSFLLIQRLRIH). EF-hand domains follow at residues 216-241 (EFFMLFDVDNDGLISFKEYIFFVTLL), 243-278 (IPESSFAVAFKMFDTDNNGEIDKEEFKTVMSLMRSQ), 329-364 (LTEEMLRLEFAHYDYKRRGSISAKDFALSMVAAADA), and 437-472 (LSDNVIEIAFHVFDSNQDGNLSVDEFLRVLHRRERD). Ca(2+) is bound by residues Asp-222, Asp-224, Asp-226, Glu-233, Asp-256, Asp-258, Asn-260, Glu-262, and Glu-267. Residues Asp-450, Asn-452, Asp-454, Asn-456, and Glu-461 each coordinate Ca(2+).

It belongs to the MICU1 family. MICU1 subfamily. As to expression, expressed in both green and non-green tissues, including roots, shoots, floral buds and pollen.

It localises to the mitochondrion inner membrane. It is found in the mitochondrion intermembrane space. Its function is as follows. Calcium-binding protein maintaining matrix calcium levels at low concentration. Regulates mitochondrial calcium dynamics in planta by restricting influx. This is Calcium uptake protein, mitochondrial from Arabidopsis thaliana (Mouse-ear cress).